The chain runs to 441 residues: Glutamyl-tRNA reductase (441 aa).

Substrate contacts are provided by residues 49-52, S109, 114-116, and Q120; these read TCNR and EGQ. C50 acts as the Nucleophile in catalysis. 198–203 serves as a coordination point for NADP(+); it reads GAGRMS.

The protein belongs to the glutamyl-tRNA reductase family. As to quaternary structure, homodimer.

It catalyses the reaction (S)-4-amino-5-oxopentanoate + tRNA(Glu) + NADP(+) = L-glutamyl-tRNA(Glu) + NADPH + H(+). It functions in the pathway porphyrin-containing compound metabolism; protoporphyrin-IX biosynthesis; 5-aminolevulinate from L-glutamyl-tRNA(Glu): step 1/2. Its pathway is porphyrin-containing compound metabolism; chlorophyll biosynthesis. Catalyzes the NADPH-dependent reduction of glutamyl-tRNA(Glu) to glutamate 1-semialdehyde (GSA). The polypeptide is Glutamyl-tRNA reductase (Prochlorococcus marinus (strain NATL1A)).